The sequence spans 90 residues: Cytochrome c7 (90 aa).

Positions 1–20 are cleaved as a signal peptide; the sequence is MKRIIASLALSVFCAGLAFA. Histidine 37, histidine 40, cysteine 47, cysteine 50, histidine 51, histidine 67, cysteine 70, cysteine 73, histidine 74, cysteine 84, cysteine 87, and histidine 88 together coordinate heme.

Binds 3 heme groups per subunit.

Functionally, may be involved in anaerobic iron respiration. The chain is Cytochrome c7 from Geobacter metallireducens (strain ATCC 53774 / DSM 7210 / GS-15).